A 495-amino-acid chain; its full sequence is Chromosomal replication initiator protein DnaA (495 aa).

The domain I, interacts with DnaA modulators stretch occupies residues 1 to 91; the sequence is MTADPDPPFV…ITALSRHLGQ (91 aa). The interval 91–154 is domain II; that stretch reads QRVELGVRIA…TPAAEDPNAV (64 aa). The tract at residues 155-371 is domain III, AAA+ region; it reads SLNRRYTFDT…GALIRVTAFA (217 aa). 4 residues coordinate ATP: Gly-199, Gly-201, Lys-202, and Thr-203. Positions 372–495 are domain IV, binds dsDNA; the sequence is SLNKTPIDKS…TTRIRQRAKR (124 aa).

Belongs to the DnaA family. Oligomerizes as a right-handed, spiral filament on DNA at oriC.

It is found in the cytoplasm. Plays an essential role in the initiation and regulation of chromosomal replication. ATP-DnaA binds to the origin of replication (oriC) to initiate formation of the DNA replication initiation complex once per cell cycle. Binds the DnaA box (a 9 base pair repeat at the origin) and separates the double-stranded (ds)DNA. Forms a right-handed helical filament on oriC DNA; dsDNA binds to the exterior of the filament while single-stranded (ss)DNA is stabiized in the filament's interior. The ATP-DnaA-oriC complex binds and stabilizes one strand of the AT-rich DNA unwinding element (DUE), permitting loading of DNA polymerase. After initiation quickly degrades to an ADP-DnaA complex that is not apt for DNA replication. Binds acidic phospholipids. This is Chromosomal replication initiator protein DnaA from Mycobacterium sp. (strain JLS).